A 402-amino-acid polypeptide reads, in one-letter code: NADH-quinone oxidoreductase subunit D (402 aa).

Belongs to the complex I 49 kDa subunit family. NDH-1 is composed of 14 different subunits. Subunits NuoB, C, D, E, F, and G constitute the peripheral sector of the complex.

Its subcellular location is the cell inner membrane. It catalyses the reaction a quinone + NADH + 5 H(+)(in) = a quinol + NAD(+) + 4 H(+)(out). NDH-1 shuttles electrons from NADH, via FMN and iron-sulfur (Fe-S) centers, to quinones in the respiratory chain. The immediate electron acceptor for the enzyme in this species is believed to be ubiquinone. Couples the redox reaction to proton translocation (for every two electrons transferred, four hydrogen ions are translocated across the cytoplasmic membrane), and thus conserves the redox energy in a proton gradient. This is NADH-quinone oxidoreductase subunit D from Protochlamydia amoebophila (strain UWE25).